The sequence spans 123 residues: uncharacterized protein (123 aa).

One can recognise a Rhodanese domain in the interval 17–117 (SNDNAFLVDV…NNQDKGWKQN (101 aa)).

This is an uncharacterized protein from Rickettsia conorii (strain ATCC VR-613 / Malish 7).